The primary structure comprises 83 residues: Putative defensin-like protein 150 (83 aa).

Positions 1–25 (MMGKHIQLSFAILIMFTIFVLGAVG) are cleaved as a signal peptide. Intrachain disulfides connect cysteine 35–cysteine 83, cysteine 44–cysteine 64, cysteine 49–cysteine 77, and cysteine 53–cysteine 79.

Belongs to the DEFL family.

The protein resides in the secreted. This is Putative defensin-like protein 150 (LCR32) from Arabidopsis thaliana (Mouse-ear cress).